Consider the following 562-residue polypeptide: Efflux pump apf11 (562 aa).

Low complexity-rich tracts occupy residues 1–10 (MGDISAATKA) and 18–30 (TPETNTTSSSSDT). Residues 1–36 (MGDISAATKAPAPPTPATPETNTTSSSSDTDVQHEP) form a disordered region. N-linked (GlcNAc...) asparagine glycosylation is present at N22. The next 8 membrane-spanning stretches (helical) occupy residues 46–66 (LVIFALGLAILVGVLDATIVA), 83–103 (AWYGSAYLLVTGATQPIFGKI), 110–130 (KLVFLSSVAILEVGSLVCALA), 141–161 (AIAGLGAAGVISGGLIITALT), 169–189 (VYTAILGSLEGVGVIIGPIIG), 200–220 (WCFWINLPIGAVLCAILVFCL), 249–269 (GGLAIAGSITCLLLALEWGGT), and 278–298 (IIVLLVVFGVSLICVAVHQHW). N-linked (GlcNAc...) asparagine glycosylation is present at N312. The next 6 membrane-spanning stretches (helical) occupy residues 317–337 (MFLLCGLCFAGAQFTVLYYLP), 356–376 (LAMVVSVIVVSVIAGGSAGAV), 382–404 (FVFFATIFSSIGAGMLYTLHPSI), 414–434 (ILFGAGSGTGIQQAIVGVQVA), 447–467 (VMLVNTLAGSIFIAVSQTLFL), and 516–536 (FLIGLVLCSITVLTWPLIRWI).

The protein belongs to the major facilitator superfamily. TCR/Tet family.

The protein localises to the membrane. It functions in the pathway secondary metabolite biosynthesis. Functionally, efflux pump; part of the gene cluster that mediates the biosynthesis of the cyclic tetrapeptide apicidin F (APF). The sequence is that of Efflux pump apf11 (apf11) from Gibberella fujikuroi (strain CBS 195.34 / IMI 58289 / NRRL A-6831) (Bakanae and foot rot disease fungus).